A 466-amino-acid polypeptide reads, in one-letter code: MSVVPVADVLQGRVAVDQEVTVRGWVRTRRDSKAGISFLAVYDGSCFDPVQAVINNSLPNYNEEVLHLTTGCSVVVTGKVVASPGQGQSFEIQATKVEVAGWVEDPDTYPMAAKRHSIEYLREVAHLRPRTNLIGAVARVRHTLAQALHRFFDEQGFFWVSTPLITASDTEGAGEMFRVSTLDLENLPRNDQGRVDFDKDFFGKESFLTVSGQLNGETYACALSKIYTFGPTFRAENSNTSRHLAEFWMLEPEVAFADLEDNARLAEAMLKYVFKAVLEERADDMKFFAERVDKDAIARLERFVSTDFAQVDYTDAVAILERCGKTFENPVFWGVDLSSEHERYLAEEHFKAPVVVKNYPKEIKAFYMRLNEDGKTVAAMDVLAPGIGEIIGGSQREERLDVLDARMAEMGLNKEDYWWYRDLRRYGTVPHSGFGLGFERLIAYVTGVQNVRDVIPFPRTPRNASF.

It belongs to the class-II aminoacyl-tRNA synthetase family. In terms of assembly, homodimer.

It is found in the cytoplasm. The catalysed reaction is tRNA(Asn) + L-asparagine + ATP = L-asparaginyl-tRNA(Asn) + AMP + diphosphate + H(+). This chain is Asparagine--tRNA ligase, found in Salmonella paratyphi A (strain ATCC 9150 / SARB42).